Consider the following 879-residue polypeptide: Alanine--tRNA ligase (879 aa).

4 residues coordinate Zn(2+): His-566, His-570, Cys-668, and His-672.

The protein belongs to the class-II aminoacyl-tRNA synthetase family. Requires Zn(2+) as cofactor.

The protein localises to the cytoplasm. The enzyme catalyses tRNA(Ala) + L-alanine + ATP = L-alanyl-tRNA(Ala) + AMP + diphosphate. Its function is as follows. Catalyzes the attachment of alanine to tRNA(Ala) in a two-step reaction: alanine is first activated by ATP to form Ala-AMP and then transferred to the acceptor end of tRNA(Ala). Also edits incorrectly charged Ser-tRNA(Ala) and Gly-tRNA(Ala) via its editing domain. The polypeptide is Alanine--tRNA ligase (Clostridium botulinum (strain Hall / ATCC 3502 / NCTC 13319 / Type A)).